Consider the following 1178-residue polypeptide: DNA-directed RNA polymerase subunit beta' (1178 aa).

The Zn(2+) site is built by Cys-60, Cys-62, Cys-75, and Cys-78. The Mg(2+) site is built by Asp-450, Asp-452, and Asp-454. Residues Cys-795, Cys-869, Cys-876, and Cys-879 each coordinate Zn(2+).

Belongs to the RNA polymerase beta' chain family. As to quaternary structure, the RNAP catalytic core consists of 2 alpha, 1 beta, 1 beta' and 1 omega subunit. When a sigma factor is associated with the core the holoenzyme is formed, which can initiate transcription. The cofactor is Mg(2+). Zn(2+) serves as cofactor.

It catalyses the reaction RNA(n) + a ribonucleoside 5'-triphosphate = RNA(n+1) + diphosphate. DNA-dependent RNA polymerase catalyzes the transcription of DNA into RNA using the four ribonucleoside triphosphates as substrates. The sequence is that of DNA-directed RNA polymerase subunit beta' from Clostridium botulinum (strain ATCC 19397 / Type A).